Here is a 523-residue protein sequence, read N- to C-terminus: 2-isopropylmalate synthase (523 aa).

A Pyruvate carboxyltransferase domain is found at 5 to 267; it reads VIIFDTTLRD…HTNINHHEIW (263 aa). Mn(2+) contacts are provided by aspartate 14, histidine 202, histidine 204, and asparagine 238. The tract at residues 392–523 is regulatory domain; it reads RLDYFNVQSG…QNKENNKETV (132 aa).

This sequence belongs to the alpha-IPM synthase/homocitrate synthase family. LeuA type 1 subfamily. Homodimer. Requires Mn(2+) as cofactor.

The protein resides in the cytoplasm. It carries out the reaction 3-methyl-2-oxobutanoate + acetyl-CoA + H2O = (2S)-2-isopropylmalate + CoA + H(+). It functions in the pathway amino-acid biosynthesis; L-leucine biosynthesis; L-leucine from 3-methyl-2-oxobutanoate: step 1/4. Its function is as follows. Catalyzes the condensation of the acetyl group of acetyl-CoA with 3-methyl-2-oxobutanoate (2-ketoisovalerate) to form 3-carboxy-3-hydroxy-4-methylpentanoate (2-isopropylmalate). This is 2-isopropylmalate synthase from Klebsiella pneumoniae subsp. pneumoniae (strain ATCC 700721 / MGH 78578).